A 404-amino-acid chain; its full sequence is Glycerol-1-phosphate dehydrogenase [NAD(P)+] (404 aa).

NAD(+) is bound by residues D55, 117 to 121 (GTVHD), and 139 to 142 (TAPS). Residue D144 participates in substrate binding. S148 is a binding site for NAD(+). D191 is a binding site for substrate. 2 residues coordinate Ni(2+): D191 and H271. H275 contacts substrate. A Ni(2+)-binding site is contributed by H291.

This sequence belongs to the glycerol-1-phosphate dehydrogenase family. In terms of assembly, homodimer. Requires Ni(2+) as cofactor.

It is found in the cytoplasm. It carries out the reaction sn-glycerol 1-phosphate + NAD(+) = dihydroxyacetone phosphate + NADH + H(+). The catalysed reaction is sn-glycerol 1-phosphate + NADP(+) = dihydroxyacetone phosphate + NADPH + H(+). Catalyzes the NAD(P)H-dependent reduction of dihydroxyacetonephosphate (DHAP or glycerone phosphate) to glycerol 1-phosphate (G1P). The G1P thus generated is probably used for the synthesis of phosphoglycerolipids in Gram-positive bacterial species. This is Glycerol-1-phosphate dehydrogenase [NAD(P)+] from Geobacillus thermodenitrificans (strain NG80-2).